The following is a 337-amino-acid chain: Nicotinate-nucleotide--dimethylbenzimidazole phosphoribosyltransferase (337 aa).

Catalysis depends on E305, which acts as the Proton acceptor.

It belongs to the CobT family.

It catalyses the reaction 5,6-dimethylbenzimidazole + nicotinate beta-D-ribonucleotide = alpha-ribazole 5'-phosphate + nicotinate + H(+). It functions in the pathway nucleoside biosynthesis; alpha-ribazole biosynthesis; alpha-ribazole from 5,6-dimethylbenzimidazole: step 1/2. Its function is as follows. Catalyzes the synthesis of alpha-ribazole-5'-phosphate from nicotinate mononucleotide (NAMN) and 5,6-dimethylbenzimidazole (DMB). The chain is Nicotinate-nucleotide--dimethylbenzimidazole phosphoribosyltransferase from Roseobacter denitrificans (strain ATCC 33942 / OCh 114) (Erythrobacter sp. (strain OCh 114)).